Consider the following 299-residue polypeptide: NmrA-like family domain-containing protein 1 (299 aa).

Residues 11–16, 37–41, 58–59, Gln-62, 79–81, Lys-92, Lys-133, and 155–158 each bind NADP(+); these read GGTGAQ, RNPRK, DQ, TNY, and YFEN. The segment at 153-189 is interaction with ASS1; that stretch reads PCYFENLLSHFLPQKAPDGKSYLLSLPTGDVPMDGMS.

This sequence belongs to the NmrA-type oxidoreductase family. As to quaternary structure, homodimer. Interacts with ASS1. Interaction is enhanced by low NADPH/NADP(+) ratios, which results in inhibition of ASS1 activity.

The protein resides in the cytoplasm. It is found in the perinuclear region. The protein localises to the nucleus. In terms of biological role, redox sensor protein. Undergoes restructuring and subcellular redistribution in response to changes in intracellular NADPH/NADP(+) levels. At low NADPH concentrations the protein is found mainly as a monomer, and binds argininosuccinate synthase (ASS1), the enzyme involved in nitric oxide synthesis. Association with ASS1 impairs its activity and reduces the production of nitric oxide, which subsecuently prevents apoptosis. Under normal NADPH concentrations, the protein is found as a dimer and hides the binding site for ASS1. The homodimer binds one molecule of NADPH. Has higher affinity for NADPH than for NADP(+). Binding to NADPH is necessary to form a stable dimer. The polypeptide is NmrA-like family domain-containing protein 1 (NMRAL1) (Homo sapiens (Human)).